The following is a 446-amino-acid chain: RUN domain-containing protein 3A (446 aa).

Residues Met-1–Ala-298 form an interaction with RAP2A region. In terms of domain architecture, RUN spans Asp-52 to Glu-189. Thr-215 is modified (phosphothreonine). Positions Asp-216 to Pro-239 are disordered. A Phosphoserine modification is found at Ser-232. Positions Tyr-267 to Ile-322 form a coiled coil. The segment covering Pro-372–Gln-384 has biased composition (polar residues). A disordered region spans residues Pro-372–Thr-404. Phosphoserine is present on residues Ser-416 and Ser-419.

Belongs to the RUNDC3 family. Interacts with the GTP-bound form of RAP2A.

In terms of biological role, may act as an effector of RAP2A in neuronal cells. This chain is RUN domain-containing protein 3A (RUNDC3A), found in Homo sapiens (Human).